The following is a 525-amino-acid chain: uncharacterized protein (525 aa).

Positions Met-1–Ala-21 are cleaved as a signal peptide. The Extracellular portion of the chain corresponds to Ala-22–Arg-448. A disordered region spans residues Lys-242–Thr-264. The chain crosses the membrane as a helical span at residues Ile-449–Tyr-469. Topologically, residues Arg-470–Glu-525 are cytoplasmic.

It is found in the membrane. This is an uncharacterized protein from Saccharomyces cerevisiae (strain ATCC 204508 / S288c) (Baker's yeast).